A 1463-amino-acid chain; its full sequence is MSNSFEILMNQLGMPAEMRQAPALAQANIERVVVHKISKVWEFHFVFSNILPIEIFLELKKGLSEEFSKTGNKAVFEIKARSQEFSNQLLQSYYREAFSEGPCASQGFKSLYQNLQVRAEGNQLFIEGSEAIDKEHFKKNHLPNLAKQLEKFGFPTFNCQVEKNDVLTQEQEEAFHAENEQIVQAANEEALRAMEQLEQMAPPPAEEKPAFDFQAKKAAAKPKLDKAEITPMIEVTTEENRLVFEGVVFDVEQKVTRTGRVLINFKMTDYTSSFSMQKWVKNEEEAQKFDLIKKNSWLRVRGNVEMNNFTRDLTMNVQDLQEVVHYERKDLMPEGERRVEFHAHTNMSTMDALPEVEEIVATAAKWGHKAVAITDHGNVQSFPHGYKAAKKAGIQLIYGMEANIVEDRVPIVYNEVEMDLSEATYVVFDVETTGLSAIYNDLIQVAASKMYKGNVIAEFDEFINPGHPLSAFTTELTGITDDHVKNAKPLEQVLQEFQEFCKDTVLVAHNATFDVGFMNANYERHDLPKISQPVIDTLEFARNLYPEYKRHGLGPLTKRFGVALEHHHMANYDAEATGRLLFIFIKEVAEKHGVTDLARLNIDLISPDSYKKARIKHATIYVKNQVGLKNIFKLVSLSNTKYFEGVPRIPRTVLDAHREGLILGSACSEGEVFDVVVSQGVDAAVEVAKYYDFIEVMPPAIYAPLIAKEQVKDMEELQTIIKSLIEVGDRLGKPVLATGNVHYIEPEEEIYREIIVRSLGQGAMINRTIGHGEHAQPAPLPKAHFRTTNEMLDEFAFLGEELARKLVIENTNALAEIFESVEVVKGDLYTPFIDKAEETVAELTYKKAFEIYGNPLPDIVDLRIEKELTSILGNGFAVIYLASQMLVQRSNERGYLVGSRGSVGSSFVATMIGITEVNPLSPHYVCGQCQYSEFITDGSYGSGFDMPHKDCPNCGHKLSKNGQDIPFETFLGFDGDKVPDIDLNFSGEDQPSAHLDVRDIFGEEYAFRAGTVGTVAAKTAYGFVKGYERDYGKFYRDAEVERLAQGAAGVKRTTGQHPGGIVVIPNYMDVYDFTPVQYPADDVTAEWQTTHFNFHDIDENVLKLDVLGHDDPTMIRKLQDLSGIDPNKIPMDDEGVMALFSGTDVLGVTPEQIGTPTGMLGIPEFGTNFVRGMVDETHPTTFAELLQLSGLSHGTDVWLGNAQDLIKQGIADLSTVIGCRDDIMVYLMHAGLEPKMAFTIMERVRKGLWLKISEEERNGYIEAMKANKVPEWYIESCGKIKYMFPKAHAAAYVMMALRVAYFKVHHPIYYYCAYFSIRAKAFDIKTMGAGLEVIKRRMEEISEKRKNNEASNVEIDLYTTLEIVNEMWERGFKFGKLDLYCSQATEFLIDGDTLIPPFVAMDGLGENVAKQLVRAREEGEFLSKTELRKRGGLSSTLVEKMDEMGILGNMPEDNQLSLFDELF.

The Exonuclease domain maps to Y425–L581.

It belongs to the DNA polymerase type-C family. PolC subfamily.

The protein localises to the cytoplasm. The enzyme catalyses DNA(n) + a 2'-deoxyribonucleoside 5'-triphosphate = DNA(n+1) + diphosphate. Required for replicative DNA synthesis. This DNA polymerase also exhibits 3' to 5' exonuclease activity. The protein is DNA polymerase III PolC-type of Streptococcus pneumoniae serotype 4 (strain ATCC BAA-334 / TIGR4).